A 704-amino-acid polypeptide reads, in one-letter code: MPRKTPIERYRNIGISAHIDAGKTTTTERILFYTGVSHKIGEVHDGAATMDWMEQEQERGITITSAATTAFWKGMAGNYPEHRINIIDTPGHVDFTIEVERSMRVLDGACMVYDSVGGVQPQSETVWRQANKYKVPRIAFVNKMDRVGADFFRVQRQIGERLKGVAVPIQIPVGAEEHFQGVVDLVKMKAIVWDDESQGVKFTYEDIPANLVELAHEWREKMVEAAAEASEELLEKYLTDHNSLTEDEIKAALRKRTIANEIVPMLCGSAFKNKGVQAMLDAVIDYLPSPADVPAILGHDLDDKEAERHPSDDEPFSALAFKIMTDPFVGQLIFFRVYSGVVESGDTLLNATKDKKERLGRILQMHANERKEIKEVRAGDIAAAVGLKEATTGDTLCDPGKPIILEKMEFPEPVISQAVEPKTKADQEKMGLALNRLAQEDPSFRVQTDEESGQTIISGMGELHLEIIVDRMKREFGVEATVGKPQVAYRETVRTVAEDVEGKFVKQSGGRGQYGHAVIKLEPNPGKGYEFLDEIKGGVIPREFIPAVNKGIEETLKSGVLAGYPVVDVKVHLTFGSYHDVDSNENAFRMAGSMAFKEAMRRAKPVLLEPMMAVEVETPEDFMGNVMGDLSSRRGIVQGMEDIAGGGGKLVRAEVPLAEMFGYSTSLRSATQGRATYTMEFKHYAETPSNVSEAVINAKQIGRG.

Residues 8 to 291 (ERYRNIGISA…AVIDYLPSPA (284 aa)) form the tr-type G domain. Residues 17–24 (AHIDAGKT), 88–92 (DTPGH), and 142–145 (NKMD) each bind GTP.

Belongs to the TRAFAC class translation factor GTPase superfamily. Classic translation factor GTPase family. EF-G/EF-2 subfamily.

The protein localises to the cytoplasm. Catalyzes the GTP-dependent ribosomal translocation step during translation elongation. During this step, the ribosome changes from the pre-translocational (PRE) to the post-translocational (POST) state as the newly formed A-site-bound peptidyl-tRNA and P-site-bound deacylated tRNA move to the P and E sites, respectively. Catalyzes the coordinated movement of the two tRNA molecules, the mRNA and conformational changes in the ribosome. The chain is Elongation factor G 1 from Burkholderia pseudomallei (strain 1710b).